Consider the following 138-residue polypeptide: Basic phospholipase A2 homolog bothropstoxin-II (138 aa).

The N-terminal stretch at methionine 1–glycine 16 is a signal peptide. 7 disulfide bridges follow: cysteine 42/cysteine 131, cysteine 44/cysteine 60, cysteine 59/cysteine 111, cysteine 65/cysteine 138, cysteine 66/cysteine 104, cysteine 73/cysteine 97, and cysteine 91/cysteine 102. The interval lysine 121–lysine 133 is important for membrane-damaging activities in eukaryotes and bacteria; heparin-binding.

The protein belongs to the phospholipase A2 family. Group II subfamily. D49 sub-subfamily. In terms of assembly, homodimer; non-covalently linked (probable alternative/compact dimer conformation). Expressed by the venom gland.

It is found in the secreted. Functionally, snake venom phospholipase A2 (PLA2) that shows low enzymatic activity even tough it conserves the catalytic residues. Shows a strong myotoxic activity and induces indirect hemolysis, anticoagulant properties, and cytotoxic activities. In vivo, it induces muscle necrosis, accompanied by polymorphonuclear cell infiltration, and edema in the mouse paw. It exerts its function even in the absence of extracellular calcium, indicating it is not a calcium-dependent enzyme. A model of myotoxic mechanism has been proposed: an apo Lys49-PLA2 is activated by the entrance of a hydrophobic molecule (e.g. fatty acid) at the hydrophobic channel of the protein leading to a reorientation of a monomer. This reorientation causes a transition between 'inactive' to 'active' states, causing alignment of C-terminal and membrane-docking sites (MDoS) side-by-side and putting the membrane-disruption sites (MDiS) in the same plane, exposed to solvent and in a symmetric position for both monomers. The MDoS region stabilizes the toxin on membrane by the interaction of charged residues with phospholipid head groups. Subsequently, the MDiS region destabilizes the membrane with penetration of hydrophobic residues. This insertion causes a disorganization of the membrane, allowing an uncontrolled influx of ions (i.e. calcium and sodium), and eventually triggering irreversible intracellular alterations and cell death. The chain is Basic phospholipase A2 homolog bothropstoxin-II from Bothrops jararacussu (Jararacussu).